We begin with the raw amino-acid sequence, 98 residues long: Large ribosomal subunit protein bL28 (98 aa).

The protein belongs to the bacterial ribosomal protein bL28 family.

This is Large ribosomal subunit protein bL28 from Phenylobacterium zucineum (strain HLK1).